Consider the following 394-residue polypeptide: Argininosuccinate synthase (394 aa).

Residues 7–15 (AYSGGLDTS) and Ala-35 contribute to the ATP site. Tyr-85 contributes to the L-citrulline binding site. ATP is bound at residue Gly-115. L-aspartate is bound by residues Thr-117, Asn-121, and Asp-122. Residue Asn-121 participates in L-citrulline binding. The L-citrulline site is built by Arg-125, Ser-174, Ser-183, Glu-258, and Tyr-270.

This sequence belongs to the argininosuccinate synthase family. Type 1 subfamily. Homotetramer.

The protein localises to the cytoplasm. The enzyme catalyses L-citrulline + L-aspartate + ATP = 2-(N(omega)-L-arginino)succinate + AMP + diphosphate + H(+). It functions in the pathway amino-acid biosynthesis; L-arginine biosynthesis; L-arginine from L-ornithine and carbamoyl phosphate: step 2/3. The protein is Argininosuccinate synthase of Methanopyrus kandleri (strain AV19 / DSM 6324 / JCM 9639 / NBRC 100938).